The primary structure comprises 67 residues: ATP synthase protein 8 (67 aa).

The chain crosses the membrane as a helical span at residues 8–24 (TWFITITSMTITLFIMF). Lys54 is modified (N6-acetyllysine; alternate). Lys54 carries the post-translational modification N6-succinyllysine; alternate. At Lys57 the chain carries N6-acetyllysine.

It belongs to the ATPase protein 8 family. In terms of assembly, F-type ATPases have 2 components, CF(1) - the catalytic core - and CF(0) - the membrane proton channel. Component of an ATP synthase complex composed of ATP5PB, ATP5MC1, ATP5F1E, ATP5PD, ATP5ME, ATP5PF, ATP5MF, MT-ATP6, MT-ATP8, ATP5F1A, ATP5F1B, ATP5F1D, ATP5F1C, ATP5PO, ATP5MG, ATP5MK and ATP5MJ. Interacts with PRICKLE3.

Its subcellular location is the mitochondrion membrane. In terms of biological role, mitochondrial membrane ATP synthase (F(1)F(0) ATP synthase or Complex V) produces ATP from ADP in the presence of a proton gradient across the membrane which is generated by electron transport complexes of the respiratory chain. F-type ATPases consist of two structural domains, F(1) - containing the extramembraneous catalytic core and F(0) - containing the membrane proton channel, linked together by a central stalk and a peripheral stalk. During catalysis, ATP synthesis in the catalytic domain of F(1) is coupled via a rotary mechanism of the central stalk subunits to proton translocation. Part of the complex F(0) domain. Minor subunit located with subunit a in the membrane. In Rhinoceros unicornis (Greater Indian rhinoceros), this protein is ATP synthase protein 8 (MT-ATP8).